The primary structure comprises 86 residues: Toxin Cn1 (86 aa).

Positions 1 to 19 (MNSLLMITACFVLIGTVWA) are cleaved as a signal peptide. An LCN-type CS-alpha/beta domain is found at 20–84 (KDGYLVDAKG…TWPLPNKTCS (65 aa)). 4 disulfides stabilise this stretch: C30/C83, C34/C59, C43/C64, and C47/C66. S84 is modified (serine amide).

This sequence belongs to the long (4 C-C) scorpion toxin superfamily. Sodium channel inhibitor family. Beta subfamily. As to expression, expressed by the venom gland.

The protein localises to the secreted. Its function is as follows. Beta toxins bind voltage-independently at site-4 of sodium channels (Nav) and shift the voltage of activation toward more negative potentials thereby affecting sodium channel activation and promoting spontaneous and repetitive firing. The protein is Toxin Cn1 of Centruroides noxius (Mexican scorpion).